Consider the following 400-residue polypeptide: Subtilisin-like protease 11 (400 aa).

Residues Met1 to Ala19 form the signal peptide. A propeptide spanning residues Ala20–Asp117 is cleaved from the precursor. Residues Ser35–Ile116 form the Inhibitor I9 domain. The Peptidase S8 domain occupies Ser127–Gln400. An N-linked (GlcNAc...) asparagine glycan is attached at Asn138. Catalysis depends on charge relay system residues Asp159 and His191. 3 N-linked (GlcNAc...) asparagine glycosylation sites follow: Asn252, Asn336, and Asn337. Ser346 acts as the Charge relay system in catalysis. N-linked (GlcNAc...) asparagine glycans are attached at residues Asn388 and Asn396.

Belongs to the peptidase S8 family.

The protein localises to the secreted. Its function is as follows. Secreted subtilisin-like serine protease with keratinolytic activity that contributes to pathogenicity. This is Subtilisin-like protease 11 (SUB11) from Arthroderma gypseum (strain ATCC MYA-4604 / CBS 118893) (Microsporum gypseum).